The sequence spans 408 residues: D-inositol 3-phosphate glycosyltransferase (408 aa).

Histidine 7 serves as a coordination point for 1D-myo-inositol 3-phosphate. UDP-N-acetyl-alpha-D-glucosamine is bound by residues 13-14 and glycine 21; that span reads QP. 1D-myo-inositol 3-phosphate is bound by residues 18–23, lysine 76, tyrosine 109, threonine 133, and arginine 153; that span reads DAGGMN. Arginine 227, lysine 232, and valine 288 together coordinate UDP-N-acetyl-alpha-D-glucosamine. The Mg(2+) site is built by phenylalanine 297, arginine 298, and alanine 300. Glutamate 310 and glutamate 318 together coordinate UDP-N-acetyl-alpha-D-glucosamine. Threonine 324 contributes to the Mg(2+) binding site.

It belongs to the glycosyltransferase group 1 family. MshA subfamily. Homodimer.

The enzyme catalyses 1D-myo-inositol 3-phosphate + UDP-N-acetyl-alpha-D-glucosamine = 1D-myo-inositol 2-acetamido-2-deoxy-alpha-D-glucopyranoside 3-phosphate + UDP + H(+). Functionally, catalyzes the transfer of a N-acetyl-glucosamine moiety to 1D-myo-inositol 3-phosphate to produce 1D-myo-inositol 2-acetamido-2-deoxy-glucopyranoside 3-phosphate in the mycothiol biosynthesis pathway. The sequence is that of D-inositol 3-phosphate glycosyltransferase from Paenarthrobacter aurescens (strain TC1).